Consider the following 476-residue polypeptide: Adenosylhomocysteinase (476 aa).

Substrate contacts are provided by Thr67, Asp142, and Glu202. Residue Thr203–Thr205 participates in NAD(+) binding. Positions 232 and 236 each coordinate substrate. Residues Asn237, Gly266–Gly271, Glu289, Asn324, Ile345–His347, and Asn390 contribute to the NAD(+) site.

Belongs to the adenosylhomocysteinase family. NAD(+) serves as cofactor.

The protein resides in the cytoplasm. The enzyme catalyses S-adenosyl-L-homocysteine + H2O = L-homocysteine + adenosine. It functions in the pathway amino-acid biosynthesis; L-homocysteine biosynthesis; L-homocysteine from S-adenosyl-L-homocysteine: step 1/1. May play a key role in the regulation of the intracellular concentration of adenosylhomocysteine. This chain is Adenosylhomocysteinase, found in Synechococcus sp. (strain CC9605).